The following is a 222-amino-acid chain: Pyridoxine/pyridoxamine 5'-phosphate oxidase (222 aa).

Residues 11–14 (RVEY) and Lys-79 contribute to the substrate site. Residues 74–79 (RTVLCK), 89–90 (YT), Lys-96, and Gln-118 each bind FMN. Substrate contacts are provided by Tyr-136, Arg-140, and Ser-144. FMN is bound by residues 153 to 154 (QS) and Trp-199. Position 205 to 207 (205 to 207 (RVH)) interacts with substrate. An FMN-binding site is contributed by Arg-209.

The protein belongs to the pyridoxamine 5'-phosphate oxidase family. In terms of assembly, homodimer. FMN is required as a cofactor.

The enzyme catalyses pyridoxamine 5'-phosphate + O2 + H2O = pyridoxal 5'-phosphate + H2O2 + NH4(+). It catalyses the reaction pyridoxine 5'-phosphate + O2 = pyridoxal 5'-phosphate + H2O2. It functions in the pathway cofactor metabolism; pyridoxal 5'-phosphate salvage; pyridoxal 5'-phosphate from pyridoxamine 5'-phosphate: step 1/1. It participates in cofactor metabolism; pyridoxal 5'-phosphate salvage; pyridoxal 5'-phosphate from pyridoxine 5'-phosphate: step 1/1. Catalyzes the oxidation of either pyridoxine 5'-phosphate (PNP) or pyridoxamine 5'-phosphate (PMP) into pyridoxal 5'-phosphate (PLP). This is Pyridoxine/pyridoxamine 5'-phosphate oxidase from Mycolicibacterium vanbaalenii (strain DSM 7251 / JCM 13017 / BCRC 16820 / KCTC 9966 / NRRL B-24157 / PYR-1) (Mycobacterium vanbaalenii).